The primary structure comprises 636 residues: Endoglucanase 4 (636 aa).

Residues 1-25 (MTRRWSFLVQCFTFKKKEGVRSRYM) form the signal peptide. The active-site Nucleophile is D82. Catalysis depends on residues H400, D438, and E447. The CBM3 domain occupies 478–635 (KVEDEFFVEA…GDLVFGTLPN (158 aa)).

Belongs to the glycosyl hydrolase 9 (cellulase E) family.

The protein localises to the secreted. It catalyses the reaction Endohydrolysis of (1-&gt;4)-beta-D-glucosidic linkages in cellulose, lichenin and cereal beta-D-glucans.. This is Endoglucanase 4 from Bacillus sp. (strain KSM-522).